We begin with the raw amino-acid sequence, 135 residues long: RxLR effector protein Avr10 (135 aa).

A signal peptide spans 1–19; sequence MRLSFIIFAISLLAGGSGA. Positions 34 to 43 are enriched in polar residues; the sequence is GTNQGASTGK. The interval 34 to 64 is disordered; it reads GTNQGASTGKRSLRYDNNAERAGEEDDEERA. Positions 44 to 63 match the RxLR-dEER motif; sequence RSLRYDNNAERAGEEDDEER. Residues 46–55 are compositionally biased toward basic and acidic residues; sequence LRYDNNAERA.

It belongs to the RxLR effector family.

The protein resides in the secreted. Its subcellular location is the host nucleus. The protein localises to the host cytoplasm. Its function is as follows. Secreted effector that acts as an elicitor of hypersensitive response (HR) specifically on plants carrying defense protein R10. Enhances P.infestans colonization of Nicotiana benthamiana leaves. The sequence is that of RxLR effector protein Avr10 from Phytophthora infestans (strain T30-4) (Potato late blight agent).